The primary structure comprises 408 residues: Glutamate N-acetyltransferase (408 aa).

Residues Thr150, Lys176, Thr189, Glu271, Asn403, and Thr408 each coordinate substrate. Thr189 functions as the Nucleophile in the catalytic mechanism.

It belongs to the ArgJ family. In terms of assembly, heterotetramer of two alpha and two beta chains.

It localises to the cytoplasm. The enzyme catalyses N(2)-acetyl-L-ornithine + L-glutamate = N-acetyl-L-glutamate + L-ornithine. The protein operates within amino-acid biosynthesis; L-arginine biosynthesis; L-ornithine and N-acetyl-L-glutamate from L-glutamate and N(2)-acetyl-L-ornithine (cyclic): step 1/1. Its function is as follows. Catalyzes the transfer of the acetyl group from N(2)-acetylornithine to glutamate, forming N-acetylglutamate and L-ornithine. The protein is Glutamate N-acetyltransferase of Methanococcus vannielii (strain ATCC 35089 / DSM 1224 / JCM 13029 / OCM 148 / SB).